The sequence spans 80 residues: MTLVMGSCCGRFCDAKNKNKKEDVEEGREGCYNYKNLNDLDESEARVEFGPLYMINEEKSDINTLDIKRRYRHTIESVYF.

The protein belongs to the orthopoxvirus OPG051 family.

In Vaccinia virus (strain Western Reserve) (VACV), this protein is Protein OPG051 (OPG051).